Here is a 575-residue protein sequence, read N- to C-terminus: Dihydroxy-acid dehydratase (575 aa).

A disordered region spans residues Met-1–Thr-25. Over residues Arg-8–Thr-25 the composition is skewed to basic and acidic residues. Position 64 (Cys-64) interacts with [2Fe-2S] cluster. Asp-96 is a binding site for Mg(2+). Cys-137 lines the [2Fe-2S] cluster pocket. Mg(2+) is bound by residues Asp-138 and Lys-139. Position 139 is an N6-carboxylysine (Lys-139). Cys-214 serves as a coordination point for [2Fe-2S] cluster. A Mg(2+)-binding site is contributed by Glu-465. Catalysis depends on Ser-491, which acts as the Proton acceptor.

Belongs to the IlvD/Edd family. Homodimer. It depends on [2Fe-2S] cluster as a cofactor. The cofactor is Mg(2+).

The enzyme catalyses (2R)-2,3-dihydroxy-3-methylbutanoate = 3-methyl-2-oxobutanoate + H2O. It carries out the reaction (2R,3R)-2,3-dihydroxy-3-methylpentanoate = (S)-3-methyl-2-oxopentanoate + H2O. It participates in amino-acid biosynthesis; L-isoleucine biosynthesis; L-isoleucine from 2-oxobutanoate: step 3/4. The protein operates within amino-acid biosynthesis; L-valine biosynthesis; L-valine from pyruvate: step 3/4. Its function is as follows. Functions in the biosynthesis of branched-chain amino acids. Catalyzes the dehydration of (2R,3R)-2,3-dihydroxy-3-methylpentanoate (2,3-dihydroxy-3-methylvalerate) into 2-oxo-3-methylpentanoate (2-oxo-3-methylvalerate) and of (2R)-2,3-dihydroxy-3-methylbutanoate (2,3-dihydroxyisovalerate) into 2-oxo-3-methylbutanoate (2-oxoisovalerate), the penultimate precursor to L-isoleucine and L-valine, respectively. This Mycobacterium avium (strain 104) protein is Dihydroxy-acid dehydratase.